The chain runs to 158 residues: SsrA-binding protein (158 aa).

It belongs to the SmpB family.

The protein resides in the cytoplasm. Its function is as follows. Required for rescue of stalled ribosomes mediated by trans-translation. Binds to transfer-messenger RNA (tmRNA), required for stable association of tmRNA with ribosomes. tmRNA and SmpB together mimic tRNA shape, replacing the anticodon stem-loop with SmpB. tmRNA is encoded by the ssrA gene; the 2 termini fold to resemble tRNA(Ala) and it encodes a 'tag peptide', a short internal open reading frame. During trans-translation Ala-aminoacylated tmRNA acts like a tRNA, entering the A-site of stalled ribosomes, displacing the stalled mRNA. The ribosome then switches to translate the ORF on the tmRNA; the nascent peptide is terminated with the 'tag peptide' encoded by the tmRNA and targeted for degradation. The ribosome is freed to recommence translation, which seems to be the essential function of trans-translation. The polypeptide is SsrA-binding protein (Chloroflexus aggregans (strain MD-66 / DSM 9485)).